The chain runs to 34 residues: Conotoxin S4.3 (34 aa).

Residue Gln1 is modified to Pyrrolidone carboxylic acid. Position 3 is a 4-carboxyglutamate (Glu3). Ser7 is a glycosylation site (O-linked (HexNAc...) serine). A glycan (O-linked (HexNAc...) threonine) is linked at Thr9. Pro17, Pro22, Pro31, and Pro32 each carry 4-hydroxyproline.

The protein belongs to the conotoxin A superfamily. Post-translationally, contains 3 disulfide bonds. In terms of tissue distribution, expressed by the venom duct.

It localises to the secreted. Probable neurotoxin with ion channel inhibitor activity. This is Conotoxin S4.3 from Conus striatus (Striated cone).